The chain runs to 545 residues: External NADH-ubiquinone oxidoreductase 2, mitochondrial (545 aa).

The transit peptide at 1-21 directs the protein to the mitochondrion; sequence MLPRLGFARTARSIHRFKMTQ. An FAD-binding site is contributed by 99–129; sequence ELVILGTGWGAISLLKKLDTSLYNVTVVSPR. NAD(+) is bound at residue 260 to 296; sequence LTFVVVGGGPTGVEFAAELQDYINQDLRKWMPDLSKE.

Belongs to the NADH dehydrogenase family.

The protein localises to the mitochondrion intermembrane space. It catalyses the reaction a quinone + NADH + H(+) = a quinol + NAD(+). The catalysed reaction is a ubiquinone + NADH + H(+) = a ubiquinol + NAD(+). External NADH dehydrogenase required for optimum cellular growth with a number of nonfermentable carbon sources, including ethanol. With NDE1, performes the mitochondrial oxidation of cytosolic NADH under these growth conditions. Regulates the mitochondrial glycerol-3-phosphate dehydrogenase, GUT2, also involved in cytosolic NADH oxidation. This chain is External NADH-ubiquinone oxidoreductase 2, mitochondrial (NDE2), found in Saccharomyces cerevisiae (strain ATCC 204508 / S288c) (Baker's yeast).